The chain runs to 423 residues: Glucose-1-phosphate adenylyltransferase (423 aa).

Residues tyrosine 98, glycine 163, 178–179 (EK), and serine 189 contribute to the alpha-D-glucose 1-phosphate site.

The protein belongs to the bacterial/plant glucose-1-phosphate adenylyltransferase family. In terms of assembly, homotetramer.

It catalyses the reaction alpha-D-glucose 1-phosphate + ATP + H(+) = ADP-alpha-D-glucose + diphosphate. The protein operates within glycan biosynthesis; glycogen biosynthesis. Its function is as follows. Involved in the biosynthesis of ADP-glucose, a building block required for the elongation reactions to produce glycogen. Catalyzes the reaction between ATP and alpha-D-glucose 1-phosphate (G1P) to produce pyrophosphate and ADP-Glc. The sequence is that of Glucose-1-phosphate adenylyltransferase from Thermotoga maritima (strain ATCC 43589 / DSM 3109 / JCM 10099 / NBRC 100826 / MSB8).